Reading from the N-terminus, the 95-residue chain is MGLRYSKAVKDKYGDREIEGRATMTLNLPQGLYGRFNCKRCWFATKGLIACSDHYLCLNCLTIMLSDGNFCEVCGKTLPKKIVFEESPSAPPYDG.

Residue G2 is the site of N-myristoyl glycine; by host attachment. The RING-type; atypical zinc-finger motif lies at 38-74 (CKRCWFATKGLIACSDHYLCLNCLTIMLSDGNFCEVC). Residues 88–91 (PSAP) carry the PTAP/PSAP motif motif.

The protein belongs to the arenaviridae Z protein family. Interacts with protein NP; this interaction probably directs the encapsidated genome to budding sites. Interacts (via RING domain) with polymerase L; this interaction inhibits viral transcription and replication, Z partially blocks the product exit tunnel for the releasing nascent RNA product. Interacts with the glycoprotein complex; this interaction plays a role in virion budding. Interacts with host eIF4E; this interaction results in eIF4E reduced affinity for its substrate, the 5'-m7 G cap structure. Interacts (via late-budding domain) with host TSG101; this interaction is essential for budding and release of viral particles. Interacts with host RPLP0; this interaction may serve to load ribosome-like particles inside the virion. Interacts with host PML; this interaction induces PML bodies redistribution in the cytoplasm upon viral infection. In terms of processing, myristoylation is required for the role of RING finger protein Z in assembly and budding.

It is found in the virion. Its subcellular location is the host cytoplasm. It localises to the host perinuclear region. The protein localises to the host cell membrane. Plays a crucial role in virion assembly and budding. Expressed late in the virus life cycle, it acts as an inhibitor of viral transcription and RNA synthesis by interacting with the viral polymerase L. Presumably recruits the NP encapsidated genome to cellular membranes at budding sites via direct interaction with NP. Plays critical roles in the final steps of viral release by interacting with host TSG101, a member of the vacuolar protein-sorting pathway and using other cellular host proteins involved in vesicle formation pathway. The budding of the virus progeny occurs after association of protein Z with the viral glycoprotein complex SSP-GP1-GP2 at the cell periphery, step that requires myristoylation of protein Z. Also selectively represses protein production by associating with host eIF4E. In cell-based minigenome assay, has an inhibitory effect on the ribonucleoprotein machinery (vRNP), which is responsible for the replication and transcription of the viral genome. The sequence is that of RING finger protein Z from Sooretamys angouya (Paraguayan rice rat).